Reading from the N-terminus, the 115-residue chain is Large ribosomal subunit protein eL30 (115 aa).

Phosphoserine is present on residues Ser10 and Ser16. Position 26 is an N6-acetyllysine; alternate (Lys26). A Glycyl lysine isopeptide (Lys-Gly) (interchain with G-Cter in SUMO2); alternate cross-link involves residue Lys26.

It belongs to the eukaryotic ribosomal protein eL30 family. Component of the large ribosomal subunit.

Its subcellular location is the cytoplasm. Functionally, component of the large ribosomal subunit. The ribosome is a large ribonucleoprotein complex responsible for the synthesis of proteins in the cell. This chain is Large ribosomal subunit protein eL30 (RPL30), found in Oryctolagus cuniculus (Rabbit).